We begin with the raw amino-acid sequence, 625 residues long: tRNA uridine 5-carboxymethylaminomethyl modification enzyme MnmG (625 aa).

Position 14–19 (14–19 (GAGHAG)) interacts with FAD. Position 273–287 (273–287 (GPRYCPSIEDKIVRF)) interacts with NAD(+).

This sequence belongs to the MnmG family. In terms of assembly, homodimer. Heterotetramer of two MnmE and two MnmG subunits. It depends on FAD as a cofactor.

The protein localises to the cytoplasm. Functionally, NAD-binding protein involved in the addition of a carboxymethylaminomethyl (cmnm) group at the wobble position (U34) of certain tRNAs, forming tRNA-cmnm(5)s(2)U34. The protein is tRNA uridine 5-carboxymethylaminomethyl modification enzyme MnmG of Clostridium botulinum (strain Loch Maree / Type A3).